A 351-amino-acid polypeptide reads, in one-letter code: Foldase protein PrsA 1 (351 aa).

A signal peptide spans 1 to 22 (MKNSNKLIASVVTLASVMALAA). C23 is lipidated: N-palmitoyl cysteine. C23 carries the S-diacylglycerol cysteine lipid modification. The region spanning 145–240 (TPTMAVEMIT…KKFYIVKVTK (96 aa)) is the PpiC domain. 2 stretches are compositionally biased toward low complexity: residues 303–317 (KTKA…SESS) and 326–351 (ESEQ…PAAQ). Residues 303–351 (KTKAASESSTTSESSKAAEENPSESEQTQTSSAEEPTETEAQTQEPAAQ) form a disordered region.

The protein belongs to the PrsA family.

It is found in the cell membrane. The catalysed reaction is [protein]-peptidylproline (omega=180) = [protein]-peptidylproline (omega=0). In terms of biological role, plays a major role in protein secretion by helping the post-translocational extracellular folding of several secreted proteins. The sequence is that of Foldase protein PrsA 1 (prsA1) from Streptococcus pyogenes serotype M18 (strain MGAS8232).